A 224-amino-acid polypeptide reads, in one-letter code: LRP chaperone MESD (224 aa).

An N-terminal signal peptide occupies residues 1-29 (MAASRWLRAVLLFLCASDLLLLPPPNAYA). The segment at 1–155 (MAASRWLRAV…DRAIFMLRDG (155 aa)) is chaperone domain. 2 disordered regions span residues 28–49 (YAAD…IRDY) and 178–224 (GQMY…REDL). The tract at residues 156-195 (SYAWEIKDFLVSQDRCAEVTLEGQMYPGKGGGSKEKNKTK) is escort domain. The segment covering 187-224 (GSKEKNKTKPEKAKKKEGDPKPRASKEDNRAGSRREDL) has biased composition (basic and acidic residues). N-linked (GlcNAc...) asparagine glycosylation occurs at Asn192. The Prevents secretion from ER motif lies at 221-224 (REDL).

The protein belongs to the MESD family. Monomer. Interacts with LRP5; the interaction prevents LRP5 from forming aggregates and chaperones LRP6 to the plasma membrane. Interacts with LRP6; the interaction prevents LRP6 from forming aggregates and chaperones LRP6 to the plasma membrane. Interacts with LRP4; the interaction promotes glycosylation of LRP4 and its cell-surface expression. Expressed in many tissues, but not in skeletal muscles. In the retina expressed in retinal ganglion cells, inner and outer plexiform layers, photoreceptor inner and outer segments and retinal pigment epithelium (at protein level).

It localises to the endoplasmic reticulum. Functionally, chaperone specifically assisting the folding of beta-propeller/EGF modules within the family of low-density lipoprotein receptors (LDLRs). Acts as a modulator of the Wnt pathway through chaperoning the coreceptors of the canonical Wnt pathway, LRP5 and LRP6, to the plasma membrane. Essential for specification of embryonic polarity and mesoderm induction. Plays an essential role in neuromuscular junction (NMJ) formation by promoting cell-surface expression of LRP4. May regulate phagocytosis of apoptotic retinal pigment epithelium (RPE) cells. The chain is LRP chaperone MESD from Mus musculus (Mouse).